Here is a 486-residue protein sequence, read N- to C-terminus: Pup--protein ligase (486 aa).

Glutamate 33 provides a ligand contact to Mg(2+). Arginine 76 contacts ATP. Tyrosine 78 provides a ligand contact to Mg(2+). The Proton acceptor role is filled by aspartate 80. Glutamate 86 contributes to the Mg(2+) binding site. Positions 89 and 451 each coordinate ATP.

The protein belongs to the Pup ligase/Pup deamidase family. Pup-conjugating enzyme subfamily.

The catalysed reaction is ATP + [prokaryotic ubiquitin-like protein]-L-glutamate + [protein]-L-lysine = ADP + phosphate + N(6)-([prokaryotic ubiquitin-like protein]-gamma-L-glutamyl)-[protein]-L-lysine.. It participates in protein degradation; proteasomal Pup-dependent pathway. The protein operates within protein modification; protein pupylation. In terms of biological role, catalyzes the covalent attachment of the prokaryotic ubiquitin-like protein modifier Pup to the proteasomal substrate proteins, thereby targeting them for proteasomal degradation. This tagging system is termed pupylation. The ligation reaction involves the side-chain carboxylate of the C-terminal glutamate of Pup and the side-chain amino group of a substrate lysine. This Bifidobacterium longum (strain NCC 2705) protein is Pup--protein ligase.